The primary structure comprises 314 residues: Triosephosphate isomerase, chloroplastic (314 aa).

Residues 1–22 (MAVASTSLASQLSGPKSLSQPY) show a composition bias toward polar residues. The interval 1–25 (MAVASTSLASQLSGPKSLSQPYSGL) is disordered. The transit peptide at 1 to 59 (MAVASTSLASQLSGPKSLSQPYSGLRRSCPKLDQSHSSLFQHLSLSSSSRKASRAVVAM) directs the protein to the chloroplast. Residues Asn70 and Lys72 each coordinate substrate. His154 (electrophile) is an active-site residue. The Proton acceptor role is filled by Glu224.

This sequence belongs to the triosephosphate isomerase family. Homodimer.

Its subcellular location is the plastid. It localises to the chloroplast. It catalyses the reaction D-glyceraldehyde 3-phosphate = dihydroxyacetone phosphate. Its pathway is carbohydrate biosynthesis; Calvin cycle. This is Triosephosphate isomerase, chloroplastic (TPI) from Fragaria ananassa (Strawberry).